Consider the following 246-residue polypeptide: Small ribosomal subunit protein uS2 (246 aa).

Belongs to the universal ribosomal protein uS2 family.

The chain is Small ribosomal subunit protein uS2 from Dictyoglomus thermophilum (strain ATCC 35947 / DSM 3960 / H-6-12).